The chain runs to 73 residues: Sodium channel neurotoxin MeuNaTxalpha-13 (73 aa).

The first 5 residues, 1–5 (TGVES), serve as a signal peptide directing secretion. The 65-residue stretch at 7 to 71 (RDAYIAKPHN…VPIRIPGKCH (65 aa)) folds into the LCN-type CS-alpha/beta domain. 4 disulfides stabilise this stretch: cysteine 17–cysteine 70, cysteine 21–cysteine 43, cysteine 29–cysteine 53, and cysteine 33–cysteine 55. The propeptide at 72–73 (RR) is removed by a carboxypeptidase.

The protein belongs to the long (4 C-C) scorpion toxin superfamily. Sodium channel inhibitor family. Alpha subfamily. In terms of tissue distribution, expressed by the venom gland.

Its subcellular location is the secreted. Alpha toxins bind voltage-independently at site-3 of sodium channels (Nav) and inhibit the inactivation of the activated channels, thereby blocking neuronal transmission. This Mesobuthus eupeus (Lesser Asian scorpion) protein is Sodium channel neurotoxin MeuNaTxalpha-13.